Reading from the N-terminus, the 88-residue chain is Putative regulatory protein Npun_R3866 (88 aa).

Belongs to the RemA family.

This is Putative regulatory protein Npun_R3866 from Nostoc punctiforme (strain ATCC 29133 / PCC 73102).